The following is a 508-amino-acid chain: METLLLDGETLTLEQVRAVATGAARAALAPAARERVRRSRALVDARLEDGEAHYGINTGFGTLAEVRIPRADLERLQRNLVLSHAAGVGAPLPLPEARALVLLRANVLAKGVSGIRERTLDLLLAMLERGVVPVVPERGSVGASGDLAPLAHLALVLIGDGEAFLAPPGAAGRPERLPGGEALRRAGLEPVVLQPKEGLALVNGTQAMAAVGTLALLRAERLAALADLAGAMTLEGLLGSHRPFAPEIQAARGQPGQIAAAAHLRALLAGSELNASHQGPGCHKVQDPYSLRCMPQVHGAARDGIGFCRGVLAREVNAATDNPLVFPDTGEIVSGGNFHGQPVALALDVLAVAASHLAAISERRVEQLVNPSLSGLPPFLAPQHGLNSGFMIAQVTSAALVSENKVLCHPASVDSIPSSAGREDHVSMGMTAALKARQVVENVRTCLAIELLVAAQALDLRAPLRPAQRVAEAHARLRERVPHLSEDRALHRDIEAVSSLVDEGGLEL.

The segment at residues 143–145 (ASG) is a cross-link (5-imidazolinone (Ala-Gly)). Ser144 bears the 2,3-didehydroalanine (Ser) mark.

This sequence belongs to the PAL/histidase family. Contains an active site 4-methylidene-imidazol-5-one (MIO), which is formed autocatalytically by cyclization and dehydration of residues Ala-Ser-Gly.

It localises to the cytoplasm. The catalysed reaction is L-histidine = trans-urocanate + NH4(+). It functions in the pathway amino-acid degradation; L-histidine degradation into L-glutamate; N-formimidoyl-L-glutamate from L-histidine: step 1/3. This chain is Histidine ammonia-lyase, found in Anaeromyxobacter sp. (strain K).